A 378-amino-acid chain; its full sequence is TelA-like protein SAB1262 (378 aa).

This sequence belongs to the TelA family.

The polypeptide is TelA-like protein SAB1262 (Staphylococcus aureus (strain bovine RF122 / ET3-1)).